Reading from the N-terminus, the 292-residue chain is AKT-interacting protein (292 aa).

The disordered stretch occupies residues 1–63; that stretch reads MNPLWSMSAG…TSPAPAAQST (63 aa). Positions 14-23 are enriched in basic and acidic residues; sequence KRAEGEEKTL. A Phosphoserine modification is found at serine 30. Residues 74-222 enclose the UBC core domain; sequence YLEYSLLAEF…VVDSVKVCTA (149 aa).

Belongs to the ubiquitin-conjugating enzyme family. FTS subfamily. As to quaternary structure, component of the FTS/Hook/FHIP complex (FHF complex), composed of AKTIP/FTS, FHIP1B, and one or more members of the Hook family of proteins HOOK1, HOOK2, and HOOK3. Interacts directly with HOOK1, HOOK2 and HOOK3. The FHF complex associates with the homotypic vesicular sorting complex (the HOPS complex). Also interacts with AKT1. May interact with FHIP1A. In terms of tissue distribution, ubiquitous. Highest expression in kidney, testis and brain and lowest in spleen and liver.

Its subcellular location is the cytoplasm. The protein localises to the cell membrane. In terms of biological role, component of the FTS/Hook/FHIP complex (FHF complex). The FHF complex may function to promote vesicle trafficking and/or fusion via the homotypic vesicular protein sorting complex (the HOPS complex). Regulates apoptosis by enhancing phosphorylation and activation of AKT1. Increases release of TNFSF6 via the AKT1/GSK3B/NFATC1 signaling cascade. FHF complex promotes the distribution of AP-4 complex to the perinuclear area of the cell. The protein is AKT-interacting protein (Aktip) of Mus musculus (Mouse).